A 151-amino-acid polypeptide reads, in one-letter code: Globin CTT-IIIA (151 aa).

The Globin domain occupies 8-147 (SMTDAQVAAV…MFHVIFNALD (140 aa)). Histidine 98 provides a ligand contact to heme b.

It belongs to the globin family. As to quaternary structure, monomer.

This chain is Globin CTT-IIIA, found in Chironomus thummi thummi (Midge).